Consider the following 406-residue polypeptide: Protrudin (406 aa).

Topologically, residues Met1–Arg71 are cytoplasmic. The sufficient for homooligomerization stretch occupies residues Met1–Trp97. A sufficient for localization to endoplasmic reticulum tubular network region spans residues Met1 to Met210. Residues Trp72–Leu92 form a helical membrane-spanning segment. Residue Asp93 is a topological domain, lumenal. A helical transmembrane segment spans residues Gln94–Leu114. Residues Gln115–Gly192 lie on the Cytoplasmic side of the membrane. Positions Ala193–Leu213 form an intramembrane region, helical. Over Asn214 to Lys406 the chain is Cytoplasmic. A disordered region spans residues Leu239–Glu295. Residues Pro250–Thr263 are compositionally biased toward pro residues. The span at Glu278 to Glu295 shows a compositional bias: acidic residues. The FYVE-type zinc-finger motif lies at Ser339–Ile405. Positions 345, 348, 361, 364, 369, 372, 397, and 400 each coordinate Zn(2+).

In terms of assembly, can form homooligomers (monomers, dimers and tetramers).

It localises to the recycling endosome membrane. The protein localises to the endoplasmic reticulum membrane. The protein resides in the cell projection. Its subcellular location is the growth cone membrane. Functionally, key regulator of RAB11-dependent vesicular trafficking during neurite extension through polarized membrane transport. Promotes axonal elongation and contributes to the establishment of neuronal cell polarity. Involved in nerve growth factor-induced neurite formation in VAPA-dependent manner. Contributes to both the formation and stabilization of the tubular ER network. Involved in ER morphogenesis by regulating the sheet-to-tubule balance and possibly the density of tubule interconnections. The polypeptide is Protrudin (ZFYVE27) (Gallus gallus (Chicken)).